A 279-amino-acid chain; its full sequence is MEFWKLQGSGNDFVVIDDRDEKLESFLKERGVSKEDFVRKVCAFHTGVGADGLILIKNPDNPENDFKWEFFNSDGSVAEMCGNGSRCAVRFAYERGIVGNKVRFETLAGVIKAEVYENGRKVKVQLTPPSKPEEKTLTVDGEEVIGVFINTGVPHFVVPVEDVEKVNVIKLGRAIRFHEEFQPKGTNVNFVQPVSEDTIKVRTYERGVESETLACGTGATACAIVSYLKGLVKKKPVNVLTRSGEVLTIDFSEDLKEVFLTGSVYKVFEGRLSEEVLEY.

Substrate contacts are provided by Asn-11 and Asn-72. Catalysis depends on Cys-81, which acts as the Proton donor. Substrate-binding positions include 82-83 (GN), Asn-187, and 205-206 (ER). The active-site Proton acceptor is the Cys-215. 216–217 (GT) serves as a coordination point for substrate.

Belongs to the diaminopimelate epimerase family. In terms of assembly, homodimer.

It localises to the cytoplasm. It catalyses the reaction (2S,6S)-2,6-diaminopimelate = meso-2,6-diaminopimelate. It functions in the pathway amino-acid biosynthesis; L-lysine biosynthesis via DAP pathway; DL-2,6-diaminopimelate from LL-2,6-diaminopimelate: step 1/1. Functionally, catalyzes the stereoinversion of LL-2,6-diaminopimelate (L,L-DAP) to meso-diaminopimelate (meso-DAP), a precursor of L-lysine and an essential component of the bacterial peptidoglycan. This is Diaminopimelate epimerase from Aquifex aeolicus (strain VF5).